An 850-amino-acid chain; its full sequence is MKNKDSLHVSRRRFLAQLGGLTVAGMLGPSLLTPRSARAADAVAPGAATKEGILTGSHWGAIRATVVDGRFVAAKPFEQDKYPSKMIAGLPDHVHNAARIRYPMVRVDWMRKGHQSDTSQRGDNRFVRVSWDEALDLFYQELERVQKTYGPSALLTASGWQSTGMFHNASGMLARAIALHGNSVSTGGDYSTGAAQVILPRVVGSMEVYEQQTSWPLVLQNSKTIVLWGSDMVKNQQANWWCPDHDVYQYYEQLKEKVASGAISVISIDPVVTSTHDYLGRDKVKHIAINPQTDVPLQLALAHTLYSEKLYDKNFLDNYCVGFDQFLPYLLGEKDGQPKDAAWAEKLCGIDADTIRALARQMAGDRTQIIAGWCVQRMQHGEQWSWMVVVLAAMLGQIGLPGGGFGFGWHYNGAGTPGRKGIILSGFSGSTTVPPVHDSTDYKGYSSTIPIARFMDAILEPGKIINWNGKSVKLPPLKMCVFAGTNPFHRHQQINRIIEGWRKLETVIAIDNQWTSTCRFADIVLPATTQFERNDLDQFGNHSNRGIIAMKQVVSPQFEARNDFDIFRDLCRRFNREAAFTEGLDEMGWLKRIWQEGSQQGKGRGIHLPTFEVFWNQQEYIEFDHPQMFVRHQAFREDPDLEPLGTPSGLIEIYSKTIADMQYDDCQGHPMWFEKIERSHGGPGSQRWPLHLQSVHPDFRLHSQLCESETLRQQYAVGGKEPVFINPQDASARGIRNGDIVRVFNARGQVLAGAVVSDRYAPGVARIHEGAWYDPDKGGDLNALCKYGNPNVLTLDTGTSQLAQATSAHTTLVEIEKYTGPMDNVTAFNGPAEMVAQCEYVPASQGNPHD.

A signal peptide (tat-type signal) is located at residues 1–39 (MKNKDSLHVSRRRFLAQLGGLTVAGMLGPSLLTPRSARA). Serine 191 contacts Mo-bis(molybdopterin guanine dinucleotide).

Belongs to the prokaryotic molybdopterin-containing oxidoreductase family. Mo-bis(molybdopterin guanine dinucleotide) serves as cofactor. Post-translationally, predicted to be exported by the Tat system. The position of the signal peptide cleavage has not been experimentally proven.

Its subcellular location is the periplasm. The enzyme catalyses trimethylamine + 2 Fe(III)-[cytochrome c] + H2O = trimethylamine N-oxide + 2 Fe(II)-[cytochrome c] + 3 H(+). Reduces trimethylamine-N-oxide (TMAO) into trimethylamine; an anaerobic reaction coupled to energy-yielding reactions. This chain is Trimethylamine-N-oxide reductase (torA), found in Salmonella typhi.